The following is a 334-amino-acid chain: Putative 2-hydroxyacid dehydrogenase UNK4.10 (334 aa).

NAD(+) is bound by residues 166-167 (GI), 244-246 (TAR), and D270. R246 is an active-site residue. E275 is an active-site residue. H293 serves as the catalytic Proton donor. 293–296 (HLGT) contacts NAD(+).

Belongs to the D-isomer specific 2-hydroxyacid dehydrogenase family.

This is Putative 2-hydroxyacid dehydrogenase UNK4.10 from Schizosaccharomyces pombe (strain 972 / ATCC 24843) (Fission yeast).